Reading from the N-terminus, the 181-residue chain is uncharacterized protein (181 aa).

Residues 1–19 (MRRLLACSAGVLCFSQLGA) form the signal peptide.

This is an uncharacterized protein from Treponema pallidum (strain Nichols).